The chain runs to 471 residues: Serine/threonine-protein kinase sid1 (471 aa).

In terms of domain architecture, Protein kinase spans 9-260; sequence YTLLRKLGSG…AKELLQHPFI (252 aa). Residues 15 to 23 and Lys-38 contribute to the ATP site; that span reads LGSGSFGVV. The Proton acceptor role is filled by Asp-129.

This sequence belongs to the protein kinase superfamily. STE Ser/Thr protein kinase family. STE20 subfamily. In terms of assembly, interacts with cdc14.

The protein localises to the cytoplasm. The protein resides in the cytoskeleton. It localises to the microtubule organizing center. Its subcellular location is the spindle pole body. The catalysed reaction is L-seryl-[protein] + ATP = O-phospho-L-seryl-[protein] + ADP + H(+). It carries out the reaction L-threonyl-[protein] + ATP = O-phospho-L-threonyl-[protein] + ADP + H(+). Its function is as follows. Has a role in the septation initiation network (SIN) required for cytokinesis. This Schizosaccharomyces pombe (strain 972 / ATCC 24843) (Fission yeast) protein is Serine/threonine-protein kinase sid1 (sid1).